Consider the following 139-residue polypeptide: Exodeoxyribonuclease 7 small subunit (139 aa).

2 disordered regions span residues 1 to 26 (MAKK…LGDF) and 82 to 139 (DAEG…EDDE). The segment covering 130–139 (ADLDSAEDDE) has biased composition (acidic residues).

Belongs to the XseB family. As to quaternary structure, heterooligomer composed of large and small subunits.

The protein localises to the cytoplasm. It catalyses the reaction Exonucleolytic cleavage in either 5'- to 3'- or 3'- to 5'-direction to yield nucleoside 5'-phosphates.. Bidirectionally degrades single-stranded DNA into large acid-insoluble oligonucleotides, which are then degraded further into small acid-soluble oligonucleotides. The polypeptide is Exodeoxyribonuclease 7 small subunit (Rhodopirellula baltica (strain DSM 10527 / NCIMB 13988 / SH1)).